The primary structure comprises 476 residues: Replication factor C large subunit (476 aa).

Position 50-57 (50-57) interacts with ATP; that stretch reads GPPGVGKT. The segment at 447–476 is disordered; sequence YEKGTKKGKGEKRRKGSDEGSGLLKWLKKD. Residues 452–461 are compositionally biased toward basic residues; it reads KKGKGEKRRK.

This sequence belongs to the activator 1 small subunits family. RfcL subfamily. Heteromultimer composed of small subunits (RfcS) and large subunits (RfcL).

Part of the RFC clamp loader complex which loads the PCNA sliding clamp onto DNA. This is Replication factor C large subunit from Ignicoccus hospitalis (strain KIN4/I / DSM 18386 / JCM 14125).